The primary structure comprises 292 residues: F-box only protein 16 (292 aa).

The F-box domain maps to 86–132 (LDFTTKLPRVLSLYIFSFLDPRSLCRCAQVCWHWKNLAELDQLWMLK). Disordered regions lie at residues 188–224 (SPEE…SSDK) and 238–292 (RDPM…PLCP). Positions 194-204 (SPLSAFRSSSS) are enriched in low complexity. A compositionally biased stretch (basic and acidic residues) spans 260–273 (RQSHDKKNKLQDRT).

As to quaternary structure, part of a SCF (SKP1-cullin-F-box) protein ligase complex. In terms of tissue distribution, expressed in heart, spleen and colon.

Its function is as follows. Probably recognizes and binds to some phosphorylated proteins and promotes their ubiquitination and degradation. In Homo sapiens (Human), this protein is F-box only protein 16 (FBXO16).